The primary structure comprises 395 residues: MAWRQLKKRAQDAMVILGGGGLLFASYLTATGDEHFYAELLMPSLQRLLDPETAHRLAVRFTSLGLLPRTTFQDSDMLEVRVLGHKFRNPVGIAAGFDKHGEAVDGLYKMGFGFVEIGSVTPEPQEGNPRPRVFRLPEDQAIINRYGFNSHGLSVVEHRLRARQQTQARLTEDGLPLGINLGKNKTSVDAASDYAEGVRVLGPLADYLVVNVSSPNTAGLRSLQGKAELRRLLTKVLQERDALKVAHKPAVLVKIAPDLTAQDKEDIASVVRELGIDGLIVTNSTVSRPASLQGALRSEPGGLSGKPLRDLSTQTIREMYALTQGRVPIVGVGGVSSGQDALEKIRAGASLVQLYTALTYRGPPVVGGVKRELEALLKEQGFARVTDAIGADHRR.

The N-terminal 10 residues, 1–10 (MAWRQLKKRA), are a transit peptide targeting the mitochondrion; not cleaved. The Mitochondrial matrix segment spans residues 1 to 10 (MAWRQLKKRA). Residues 11 to 30 (QDAMVILGGGGLLFASYLTA) traverse the membrane as a helical segment. At 31–395 (TGDEHFYAEL…TDAIGADHRR (365 aa)) the chain is on the mitochondrial intermembrane side. FMN is bound by residues 95–99 (AGFDK) and Ser119. Residue Lys99 participates in substrate binding. 144–148 (NRYGF) is a substrate binding site. FMN is bound by residues Asn180 and Asn211. 211–216 (NVSSPN) provides a ligand contact to substrate. The active-site Nucleophile is Ser214. FMN contacts are provided by Lys254 and Thr282. Residue 283–284 (NS) coordinates substrate. FMN-binding positions include Gly305, Gly334, and 355 to 356 (YT).

This sequence belongs to the dihydroorotate dehydrogenase family. Type 2 subfamily. Monomer. Requires FMN as cofactor. In terms of processing, the uncleaved transit peptide is required for mitochondrial targeting and proper membrane integration.

It localises to the mitochondrion inner membrane. The catalysed reaction is (S)-dihydroorotate + a quinone = orotate + a quinol. It participates in pyrimidine metabolism; UMP biosynthesis via de novo pathway; orotate from (S)-dihydroorotate (quinone route): step 1/1. Catalyzes the conversion of dihydroorotate to orotate with quinone as electron acceptor. Required for UMP biosynthesis via de novo pathway. In Bos taurus (Bovine), this protein is Dihydroorotate dehydrogenase (quinone), mitochondrial (DHODH).